A 387-amino-acid polypeptide reads, in one-letter code: uncharacterized protein (387 aa).

Residues 5 to 25 form a helical membrane-spanning segment; the sequence is FVLFSFPFLLLSSMLIFYQTT.

Belongs to the LicD transferase family.

It is found in the membrane. This is an uncharacterized protein from Caenorhabditis elegans.